A 236-amino-acid chain; its full sequence is Auxin-responsive protein IAA13 (236 aa).

Disordered stretches follow at residues 1-24, 52-93, and 105-130; these read MAGADVDVGTELRLGLPGGGGGAA, EAAA…WPPV, and SVKSKKEEEADKQQQQPAANASGSNS. The EAR-like (transcriptional repression) signature appears at 12 to 16; sequence LRLGL. The segment covering 52–61 has biased composition (low complexity); that stretch reads EAAAGKAEAP. Basic and acidic residues predominate over residues 62–81; sequence AAEKAKRPAEAAAADAEKPP. Residues 117 to 130 show a composition bias toward low complexity; that stretch reads QQQQPAANASGSNS. In terms of domain architecture, PB1 spans 131 to 218; sequence SAFVKVSMDG…SCKRLRIMKG (88 aa).

Belongs to the Aux/IAA family. In terms of assembly, homodimers and heterodimers.

It localises to the nucleus. Aux/IAA proteins are short-lived transcriptional factors that function as repressors of early auxin response genes at low auxin concentrations. The protein is Auxin-responsive protein IAA13 (IAA13) of Oryza sativa subsp. japonica (Rice).